The primary structure comprises 196 residues: uncharacterized protein (196 aa).

Residues 26 to 46 (ITFFFILLICFICILLLLAIF) form a helical membrane-spanning segment.

The protein resides in the membrane. This is an uncharacterized protein from Mus musculus (Mouse).